A 209-amino-acid polypeptide reads, in one-letter code: Pyridoxine/pyridoxamine 5'-phosphate oxidase (209 aa).

Substrate is bound by residues 5–8 (REEY) and Lys63. FMN contacts are provided by residues 58–63 (RVVLLK), 73–74 (FT), Arg79, Lys80, and Gln102. The substrate site is built by Tyr120, Arg124, and Ser128. Residues 137 to 138 (QS) and Trp181 each bind FMN. 187-189 (RLH) contacts substrate. Arg191 contributes to the FMN binding site.

Belongs to the pyridoxamine 5'-phosphate oxidase family. As to quaternary structure, homodimer. The cofactor is FMN.

It carries out the reaction pyridoxamine 5'-phosphate + O2 + H2O = pyridoxal 5'-phosphate + H2O2 + NH4(+). The enzyme catalyses pyridoxine 5'-phosphate + O2 = pyridoxal 5'-phosphate + H2O2. Its pathway is cofactor metabolism; pyridoxal 5'-phosphate salvage; pyridoxal 5'-phosphate from pyridoxamine 5'-phosphate: step 1/1. It participates in cofactor metabolism; pyridoxal 5'-phosphate salvage; pyridoxal 5'-phosphate from pyridoxine 5'-phosphate: step 1/1. In terms of biological role, catalyzes the oxidation of either pyridoxine 5'-phosphate (PNP) or pyridoxamine 5'-phosphate (PMP) into pyridoxal 5'-phosphate (PLP). This Alcanivorax borkumensis (strain ATCC 700651 / DSM 11573 / NCIMB 13689 / SK2) protein is Pyridoxine/pyridoxamine 5'-phosphate oxidase.